A 400-amino-acid chain; its full sequence is Cytochrome P450 BJ-1 homolog (400 aa).

C349 contributes to the heme binding site.

This sequence belongs to the cytochrome P450 family. Requires heme as cofactor.

Functionally, cytochromes P450 are a group of heme-thiolate monooxygenases. They oxidize a variety of structurally unrelated compounds, including steroids, fatty acids, and xenobiotics. The protein is Cytochrome P450 BJ-1 homolog (cyp112A2) of Sinorhizobium fredii (strain NBRC 101917 / NGR234).